The primary structure comprises 81 residues: Photosystem I iron-sulfur center (81 aa).

4Fe-4S ferredoxin-type domains are found at residues 2 to 31 (SHSVKVYDTCIGCTQCVRACPTDVLEMIPW) and 39 to 68 (IASAPRTEDCVGCKRCESACPTDFLSVRVY). Residues Cys-11, Cys-14, Cys-17, Cys-21, Cys-48, Cys-51, Cys-54, and Cys-58 each contribute to the [4Fe-4S] cluster site.

As to quaternary structure, the eukaryotic PSI reaction center is composed of at least 11 subunits. The cofactor is [4Fe-4S] cluster.

It localises to the plastid thylakoid membrane. It carries out the reaction reduced [plastocyanin] + hnu + oxidized [2Fe-2S]-[ferredoxin] = oxidized [plastocyanin] + reduced [2Fe-2S]-[ferredoxin]. Its function is as follows. Apoprotein for the two 4Fe-4S centers FA and FB of photosystem I (PSI); essential for photochemical activity. FB is the terminal electron acceptor of PSI, donating electrons to ferredoxin. The C-terminus interacts with PsaA/B/D and helps assemble the protein into the PSI complex. Required for binding of PsaD and PsaE to PSI. PSI is a plastocyanin-ferredoxin oxidoreductase, converting photonic excitation into a charge separation, which transfers an electron from the donor P700 chlorophyll pair to the spectroscopically characterized acceptors A0, A1, FX, FA and FB in turn. This chain is Photosystem I iron-sulfur center, found in Cuscuta obtusiflora (Peruvian dodder).